Here is a 316-residue protein sequence, read N- to C-terminus: DMOA farnesyltransferase nvfB (316 aa).

The next 9 membrane-spanning stretches (helical) occupy residues 47–67, 71–91, 115–135, 139–159, 162–182, 191–211, 234–254, 258–278, and 294–314; these read VVGVVFGAAVAPTKLPATILL, LILVLWSLFLRSAGCVWNDVI, WNAVMLTAGIFACGGSLLSFL, CAIEALIEIFFALLYPFGKRF, FPQLILVNIGWAIPMSMHSLG, PTFFMFLFIALVIVMIDVVYS, IELLSYAFFYASTGALLAAGY, LGIPFTVLSVGGHFGGFLYFL, and KLACLIASLFWVVGLFVEYYL.

This sequence belongs to the UbiA prenyltransferase family.

It localises to the membrane. It carries out the reaction 3,5-dimethylorsellinate + (2E,6E)-farnesyl diphosphate = (3R)-3-farnesyl-6-hydroxy-2,3,5-trimethyl-4-oxocyclohexa-1,5-diene-1-carboxylate + diphosphate + H(+). It functions in the pathway secondary metabolite biosynthesis; terpenoid biosynthesis. Its function is as follows. DMOA farnesyltransferase; part of the gene cluster that mediates the biosynthesis of novofumigatonin, a heavily oxygenated meroterpenoid containing a unique orthoester moiety. The first step of the pathway is the synthesis of 3,5-dimethylorsellinic acid (DMOA) by the polyketide synthase nvfA via condensation of one acetyl-CoA starter unit with 3 malonyl-CoA units and 2 methylations. DMOA is then converted to farnesyl-DMOA by the farnesyltransferase nvfB. Epoxydation by FAD-dependent monooxygenase nvfK, followed by a protonation-initiated cyclization catalyzed by the terpene cyclase nvfL leads to the production of asnavolin H. The short chain dehydrogenase nvfC then as a 3-OH dehydrogenase of asnovolin H to yield chemesin D. There are two branches to synthesize asnovolin A from chemesin D. In one branch, chemesin D undergoes Baeyer-Villiger oxidation by nvfH, methylation by nvfJ, and enoyl reduction by the nvfM D enoylreductase that reduces the double bond between C-5'and C-6', to form respectively asnovolin I, asnovolin K, and asnovolin A. In the other branch, the methylation precedes the Baeyer-Villiger oxidation and the enoyl reduction to yield asnovolin A via the asnovolin J intermediate. Asnovolin A is further converted to fumigatonoid A by the Fe(II)/2-oxoglutarate-dependent dioxygenase nvfI that catalyzes an endoperoxidation reaction. The alpha/beta hydrolase nvfD then acts as an epimerase that converts fumigatonoid A to its C-5' epimer, which then undergoes spontaneous or nvfD-catalyzed lactonization. The following step utilizes the ketoreductase nvfG to produce fumigatonoid B. The dioxygenase nvfE further converts fumigatonoid B into fumigatonoid C. Finally the Fe(II)/2-oxoglutarate-dependent dioxygenase nvfF catalyzes two rounds of oxidation to transform fumigatonoid C into the end product, novofumigatonin A. The chain is DMOA farnesyltransferase nvfB from Aspergillus novofumigatus (strain IBT 16806).